Consider the following 228-residue polypeptide: Heptaprenylglyceryl phosphate synthase (228 aa).

Lys12 provides a ligand contact to sn-glycerol 1-phosphate. Mg(2+)-binding residues include Asp14 and Thr40. Sn-glycerol 1-phosphate-binding positions include 159-164 (YLEYSG), Gly189, and 209-210 (GN).

Belongs to the GGGP/HepGP synthase family. Group I subfamily. In terms of assembly, homodimer. Mg(2+) is required as a cofactor.

The catalysed reaction is sn-glycerol 1-phosphate + all-trans-heptaprenyl diphosphate = 3-heptaprenyl-sn-glycero-1-phosphate + diphosphate. It functions in the pathway membrane lipid metabolism; glycerophospholipid metabolism. Prenyltransferase that catalyzes in vivo the transfer of the heptaprenyl moiety of heptaprenyl pyrophosphate (HepPP; 35 carbon atoms) to the C3 hydroxyl of sn-glycerol-1-phosphate (G1P), producing heptaprenylglyceryl phosphate (HepGP). This reaction is an ether-bond-formation step in the biosynthesis of archaea-type G1P-based membrane lipids found in Bacillales. This Geobacillus sp. (strain WCH70) protein is Heptaprenylglyceryl phosphate synthase.